The chain runs to 116 residues: Ribonuclease P protein component (116 aa).

It belongs to the RnpA family. In terms of assembly, consists of a catalytic RNA component (M1 or rnpB) and a protein subunit.

The catalysed reaction is Endonucleolytic cleavage of RNA, removing 5'-extranucleotides from tRNA precursor.. Its function is as follows. RNaseP catalyzes the removal of the 5'-leader sequence from pre-tRNA to produce the mature 5'-terminus. It can also cleave other RNA substrates such as 4.5S RNA. The protein component plays an auxiliary but essential role in vivo by binding to the 5'-leader sequence and broadening the substrate specificity of the ribozyme. In Lachnoclostridium phytofermentans (strain ATCC 700394 / DSM 18823 / ISDg) (Clostridium phytofermentans), this protein is Ribonuclease P protein component.